The following is a 385-amino-acid chain: Protein pelota homolog (385 aa).

It belongs to the eukaryotic release factor 1 family. Pelota subfamily. In terms of assembly, component of the Pelota-HBS1L complex, also named Dom34-Hbs1 complex, composed of PELO and HBS1L. Requires a divalent metal cation as cofactor.

It is found in the cytoplasm. Its function is as follows. Component of the Pelota-HBS1L complex, a complex that recognizes stalled ribosomes and triggers the No-Go Decay (NGD) pathway. In the Pelota-HBS1L complex, PELO recognizes ribosomes stalled at the 3' end of an mRNA and engages stalled ribosomes by destabilizing mRNA in the mRNA channel. Following mRNA extraction from stalled ribosomes by the SKI complex, the Pelota-HBS1L complex promotes recruitment of ABCE1, which drives the disassembly of stalled ribosomes, followed by degradation of damaged mRNAs as part of the NGD pathway. The sequence is that of Protein pelota homolog (pelo) from Danio rerio (Zebrafish).